We begin with the raw amino-acid sequence, 234 residues long: Small ribosomal subunit protein uS3 (234 aa).

One can recognise a KH type-2 domain in the interval 17-86 (VEKFLTKELK…SPQVEVQQVQ (70 aa)).

The protein belongs to the universal ribosomal protein uS3 family. Part of the 30S ribosomal subunit.

Its function is as follows. Binds the lower part of the 30S subunit head. This Methanoculleus marisnigri (strain ATCC 35101 / DSM 1498 / JR1) protein is Small ribosomal subunit protein uS3.